The sequence spans 464 residues: Armadillo repeat-containing protein 6 homolog (464 aa).

Threonine 9 is modified (phosphothreonine). ARM repeat units lie at residues 235–275, 287–331, 332–374, and 375–418; these read AHEH…TLAV, GGLK…QQGV, APII…FDTG, and IAEV…ISFG.

Belongs to the ARMC6 family.

The protein is Armadillo repeat-containing protein 6 homolog of Drosophila melanogaster (Fruit fly).